The sequence spans 195 residues: ATP-dependent Clp protease proteolytic subunit (195 aa).

Catalysis depends on serine 99, which acts as the Nucleophile. Residue histidine 124 is part of the active site.

Belongs to the peptidase S14 family. In terms of assembly, fourteen ClpP subunits assemble into 2 heptameric rings which stack back to back to give a disk-like structure with a central cavity, resembling the structure of eukaryotic proteasomes.

Its subcellular location is the cytoplasm. It catalyses the reaction Hydrolysis of proteins to small peptides in the presence of ATP and magnesium. alpha-casein is the usual test substrate. In the absence of ATP, only oligopeptides shorter than five residues are hydrolyzed (such as succinyl-Leu-Tyr-|-NHMec, and Leu-Tyr-Leu-|-Tyr-Trp, in which cleavage of the -Tyr-|-Leu- and -Tyr-|-Trp bonds also occurs).. Functionally, cleaves peptides in various proteins in a process that requires ATP hydrolysis. Has a chymotrypsin-like activity. Plays a major role in the degradation of misfolded proteins. The sequence is that of ATP-dependent Clp protease proteolytic subunit from Caldicellulosiruptor saccharolyticus (strain ATCC 43494 / DSM 8903 / Tp8T 6331).